The primary structure comprises 155 residues: Small ribosomal subunit protein uS7c (155 aa).

It belongs to the universal ribosomal protein uS7 family. Part of the 30S ribosomal subunit.

Its subcellular location is the plastid. The protein localises to the chloroplast. One of the primary rRNA binding proteins, it binds directly to 16S rRNA where it nucleates assembly of the head domain of the 30S subunit. In Yucca glauca (Soapweed yucca), this protein is Small ribosomal subunit protein uS7c (rps7).